The sequence spans 313 residues: DDRGK domain-containing protein 1 (313 aa).

Residues 1 to 28 form a helical membrane-spanning segment; the sequence is MVSPVVYLVVAALLVGLILFLTRGRGRA. Positions 1–113 are mediates interaction with CDK5RAP3; that stretch reads MVSPVVYLVV…IEKPVETHLS (113 aa). Residues 29-313 are Cytoplasmic-facing; it reads AAAAQEPLHN…GRETPAQAPA (285 aa). The tract at residues 40–88 is disordered; that stretch reads EVPAAAGRVARPQPLEPEEQRAAGRPRRRRDLGSRLQAQRRAQRVAWAD. 2 positions are modified to phosphoserine: S73 and S113. The span at 73–87 shows a compositional bias: low complexity; it reads SRLQAQRRAQRVAWA. The interval 117–215 is mediates interaction with TRIP4; it reads GAKKLRKLEE…MTEEQSHSFL (99 aa). The segment at 130-185 is disordered; sequence RKAQREAEEAEREERKRLESQREAEWKKEEERLRLEEEQKEEEERKAQEEQAQREH. A UFM1-interacting motif (UFIM) motif is present at residues 194–208; the sequence is TFVVVEEGVGETMTE. The segment at 215-313 is mediates interaction with UFL1; the sequence is LAEFINYIKQ…GRETPAQAPA (99 aa). The 45-residue stretch at 228–272 folds into the PCI domain; that stretch reads VLLEDLASQVGLRTQDTINRIQDLLAEGTLTGVIDDRGKFIYITP. K266 is covalently cross-linked (Glycyl lysine isopeptide (Lys-Gly) (interchain with G-Cter in UFM1)).

This sequence belongs to the DDRGK1 family. Component of the UFM1 ribosome E3 ligase (UREL) complex, composed of UFL1, DDRGK1 and CDK5RAP3. Interacts with (unphosphorylated) ERN1/IRE1-alpha; interaction is dependent on UFM1 and takes place in response to endoplasmic reticulum stress, regulating ERN1/IRE1-alpha stability. Interacts with NFKBIA. Interacts with SOX9. In terms of processing, ubiquitinated. Ubiquitination probably triggers proteasomal degradation and is negatively regulated by UFL1, the enzyme involved in the ufmylation of DDRGK1. Ufmylated; conjugated to ubiquitin-like protein UFM1, probably at Lys-266 by UFL1. The relevance of ufmylation is however unclear: as DDRGK1 acts as a substrate adapter for ufmylation, it is uncertain whether ufmylation is a collateral effect of the ufmylation process or whether it is required to regulate its activity.

It localises to the endoplasmic reticulum membrane. In terms of biological role, component of the UFM1 ribosome E3 ligase (UREL) complex, a multiprotein complex that catalyzes ufmylation of endoplasmic reticulum-docked proteins. The UREL complex plays a key role in ribosome recycling by mediating mono-ufmylation of the RPL26/uL24 subunit of the 60S ribosome following ribosome dissociation: ufmylation weakens the junction between post-termination 60S subunits and SEC61 translocons, promoting release and recycling of the large ribosomal subunit from the endoplasmic reticulum membrane. Ufmylation of RPL26/uL24 and subsequent 60S ribosome recycling either take place after normal termination of translation or after ribosome stalling during cotranslational translocation at the endoplasmic reticulum. Within the UREL complex, DDRGK1 tethers the complex to the endoplasmic reticulum membrane to restrict its activity to endoplasmic reticulum-docked ribosomes and acts as an ufmylation 'reader': following RPL26/uL24 ufmylation, DDRGK1 specifically binds to ufmylated RPL26/uL24 via its UFIM motif, resulting in stable association between the 60S ribosome and the UREL complex, followed by dissociation of the 60S ribosome subunit from the endoplasmic reticulum membrane. The UREL complex is also involved in reticulophagy in response to endoplasmic reticulum stress by promoting ufmylation of proteins such as CYB5R3 and RPN1, thereby promoting lysosomal degradation of ufmylated proteins. Ufmylation-dependent reticulophagy inhibits the unfolded protein response (UPR) by regulating ERN1/IRE1-alpha stability. Acts as a regulator of immunity by promoting differentiation of B-cells into plasma cells: acts by promoting expansion of the endoplasmic reticulum and regulating the unfolded protein response (UPR). May also be required for TRIP4 ufmylation. May play a role in NF-kappa-B-mediated transcription through regulation of the phosphorylation and the degradation of NFKBIA, the inhibitor of NF-kappa-B. Plays a role in cartilage development through SOX9, inhibiting the ubiquitin-mediated proteasomal degradation of this transcriptional regulator. Required for stabilization and ufmylation of ATG9A. This is DDRGK domain-containing protein 1 from Bos taurus (Bovine).